Here is a 373-residue protein sequence, read N- to C-terminus: Inhibitor of nuclear factor kappa-B kinase-interacting protein (373 aa).

Over residues Met-1–Gly-11 the composition is skewed to basic residues. Residues Met-1–Ala-38 form a disordered region. Positions Glu-18 to Glu-30 are enriched in basic and acidic residues. A helical membrane pass occupies residues Gly-43–Val-59. Coiled coils occupy residues Glu-64–Ser-257 and Thr-290–Ile-325. The N-linked (GlcNAc...) asparagine glycan is linked to Asn-151.

Post-translationally, N-glycosylated at Asn-151.

Its subcellular location is the endoplasmic reticulum membrane. In terms of biological role, target of p53/TP53 with pro-apoptotic function. The polypeptide is Inhibitor of nuclear factor kappa-B kinase-interacting protein (Ikbip) (Rattus norvegicus (Rat)).